We begin with the raw amino-acid sequence, 1065 residues long: MVAHLNIHTSFDLLDSSLRIDALIDKAKKEGYRALAITDTNVLYGYPKFYDACIAAHIHPIFGMTIYLTDGLYTIETVVLAKNNQGLKSLYQISSAIMMRNKEEVPIEWLKRYDEHLIIIFKEAELSHKQIIDAFEGKKELYLNHNSNNTLTGKRVWMQSARYLNEDDAETIPALHAIRDNTKLDLIHEKETLDEHFPSIEELQTLNLSEDMITNANEIEELCQAEIAYHQSLLPQFVTPNGETSKDYLWTILIHRLREWELNDKTYFNRLKHEYKIITDMGFEDYFLIVSDLIHFAKTHEVMVGPGRGSSAGSLVSYLLGITTIDPLKYNLLFERFLNPERVTMPDIDIDFEDTRREKVIKYVQDKYGEHHVSGIVTFGHLLARAVARDVGRIMGFDETSLNEISKLIPHKLGITLEEAYQKPEFKAFVHRNHRNERWFEVSKKLEGLPRHTSTHAAGIIINDQPLFKFAPLTTGDTGLLTQWTMTEAERIGLLKIDFLGLRNLSIIHQIILQVKKDLNINIDIEAIPYDDKKVFDLLSNGDTTGIFQLESDGVRSVLKRLQPEHFEDIVAVTSLYRPGPMEEIPTYITRRHNPNQVAYLHPDLEPILKNTYGVIIYQEQIMLIASQVAGFSYGEADILRRAMSKKNRAILESERQHFIDGAKNNGYGEQISKQIFDLILKFADYGFPRAHAVSYSKIAYIMSYLKVHYPHYFYANILSNVIGSEKKTAAMIDEAKHQRISILPPNINQSHWYYKASNKGIYLSLGTIKGIGYQSVKLIIDERQQNGPYRDFFDFSRRIPKRVKNRKLLESLILVGAFDTFGKTRATLLQAIDQVLDLNSDVEQDEMLFDLLTPKQSYEEKEELPDQLLSDYEKEYLGFYISKHPVEKKFEKKQYLGIFQLSNGSHYQPILVQFDHIKQIRTKNGQNMAFVTMNDGRTMMDGVIFPDKFKKFETSISKEQMYIVLGKFEKRNQQMQLIINQLFEVEAYEQTKLSNSKKVILRNVTHLEPQFEHSKVESNEQHALNIYGFDESANKMTMLGQIERQRQNFDLLIQTYSPADIRFI.

The protein belongs to the DNA polymerase type-C family. DnaE subfamily. DNA polymerase III contains a core (composed of alpha, epsilon and theta chains) that associates with a tau subunit. This core dimerizes to form the PolIII' complex. PolIII' associates with the gamma complex (composed of gamma, delta, delta', psi and chi chains) and with the beta chain to form the complete DNA polymerase III complex.

Its subcellular location is the cytoplasm. It carries out the reaction DNA(n) + a 2'-deoxyribonucleoside 5'-triphosphate = DNA(n+1) + diphosphate. In terms of biological role, DNA polymerase III is a complex, multichain enzyme responsible for most of the replicative synthesis in bacteria. This DNA polymerase also exhibits 3' to 5' exonuclease activity. The alpha chain is the DNA polymerase. The chain is DNA polymerase III subunit alpha (dnaE) from Staphylococcus epidermidis (strain ATCC 12228 / FDA PCI 1200).